A 77-amino-acid chain; its full sequence is Small ribosomal subunit protein uS17 (77 aa).

Belongs to the universal ribosomal protein uS17 family. As to quaternary structure, part of the 30S ribosomal subunit.

Functionally, one of the primary rRNA binding proteins, it binds specifically to the 5'-end of 16S ribosomal RNA. The protein is Small ribosomal subunit protein uS17 of Rickettsia conorii (strain ATCC VR-613 / Malish 7).